A 245-amino-acid chain; its full sequence is Probable phosphatase Teth514_1060 (245 aa).

Positions 8, 10, 16, 41, 74, 102, 133, 194, and 196 each coordinate Zn(2+).

Belongs to the PHP family. The cofactor is Zn(2+).

This chain is Probable phosphatase Teth514_1060, found in Thermoanaerobacter sp. (strain X514).